Reading from the N-terminus, the 289-residue chain is UTP--glucose-1-phosphate uridylyltransferase 2 (289 aa).

Belongs to the UDPGP type 2 family.

It catalyses the reaction alpha-D-glucose 1-phosphate + UTP + H(+) = UDP-alpha-D-glucose + diphosphate. The protein operates within glycolipid metabolism; diglucosyl-diacylglycerol biosynthesis. Functionally, catalyzes the formation of UDP-glucose from glucose-1-phosphate and UTP. This is an intermediate step in the biosynthesis of diglucosyl-diacylglycerol (Glc2-DAG), i.e. a glycolipid found in the membrane, which is also used as a membrane anchor for lipoteichoic acid (LTA). The sequence is that of UTP--glucose-1-phosphate uridylyltransferase 2 (gtaB2) from Staphylococcus saprophyticus subsp. saprophyticus (strain ATCC 15305 / DSM 20229 / NCIMB 8711 / NCTC 7292 / S-41).